A 146-amino-acid chain; its full sequence is MGNRLNGSYLSNTDMSIEDEQNKYNEAIEDCKICNKVYIKQSGKIDKKELNRIKKLDFFYSQKTDYEIERMFFNVPNGTFLLTDDATNENLFIAQKDLENGSLNIAKLEFKGKALYIDGKDYFSLENYLKTFEDFYKYPLIYNKNE.

The protein belongs to the asfivirus MGF 100 family.

Functionally, plays a role in virus cell tropism, and may be required for efficient virus replication in macrophages. The protein is Protein MGF 100-3L of Ornithodoros (relapsing fever ticks).